We begin with the raw amino-acid sequence, 28 residues long: Palustrin-1a (28 aa).

Cysteine 22 and cysteine 28 are disulfide-bonded.

Expressed by the skin glands.

It localises to the secreted. Antimicrobial activity against Gram-negative bacterium E.coli. This chain is Palustrin-1a, found in Lithobates palustris (Pickerel frog).